A 491-amino-acid polypeptide reads, in one-letter code: Transcription factor unc-3 (491 aa).

The segment at 66–69 (RKSN) is interaction with DNA. A C5-type zinc finger spans residues 154–173 (CRVLLTHEVMCSRCCEKKSC). Interaction with DNA regions lie at residues 200-207 (NCLKNAGN) and 239-242 (NNSK). Positions 240–261 (NSKHGRRTKRTDASDDSEYSES) are disordered. Residues 269-355 (PVIKALFPSE…SRGTPLRFSY (87 aa)) enclose the IPT/TIG domain.

It belongs to the COE family. As to quaternary structure, may homodimerise. Interacts with jmjd-3.1. May interact with GFI1 homolog pag-3.

The protein resides in the nucleus. Transcription factor. Involved in motor neuron fate determination and maintenance, acting as an activator of gene expression in a subset of motor neurons. May act in concert with GFI1 homolog pag-3 in motor neuron fate determination. Required to maintain the expression of transcriptional repressors bnc-1 and cfi-1, which play roles in the cell fate of motor neurons. May play a role in the expression of proteins essential for axonal pathfinding and/or neuronal differentiation in both sensory and motor neurons. Cooperates with jmjd-3.1 and wdr-5.1 to ensure robust transdifferentiation of the Y rectal cell to the PDA motor neuron during larval development. In Caenorhabditis elegans, this protein is Transcription factor unc-3 (unc-3).